We begin with the raw amino-acid sequence, 975 residues long: Monofunctional C1-tetrahydrofolate synthase, mitochondrial (975 aa).

The transit peptide at 1-30 (MSARLPFVLRRLARPQHPGSPRRLPSLCRA) directs the protein to the mitochondrion. Residues 13 to 45 (ARPQHPGSPRRLPSLCRASSGRGSGCGGGEGLL) form a disordered region. A methylenetetrahydrofolate dehydrogenase and cyclohydrolase region spans residues 31–345 (SSGRGSGCGG…REQQHRRWRL (315 aa)). The segment covering 34–44 (RGSGCGGGEGL) has biased composition (gly residues). An N6-acetyllysine; alternate modification is found at K187. N6-succinyllysine; alternate is present on K187. Positions 346–975 (HCLKLQPLSP…TETEQVKGLF (630 aa)) are formyltetrahydrofolate synthetase. A Phosphoserine modification is found at S354. 420-427 (TPLGEGKS) contributes to the ATP binding site. K593 is modified (N6-succinyllysine).

In the N-terminal section; belongs to the tetrahydrofolate dehydrogenase/cyclohydrolase family. It in the C-terminal section; belongs to the formate--tetrahydrofolate ligase family. As to quaternary structure, homodimer.

Its subcellular location is the mitochondrion. It carries out the reaction (6S)-5,6,7,8-tetrahydrofolate + formate + ATP = (6R)-10-formyltetrahydrofolate + ADP + phosphate. Its pathway is one-carbon metabolism; tetrahydrofolate interconversion. Functionally, may provide the missing metabolic reaction required to link the mitochondria and the cytoplasm in the mammalian model of one-carbon folate metabolism complementing thus the enzymatic activities of MTHFD2. The polypeptide is Monofunctional C1-tetrahydrofolate synthase, mitochondrial (MTHFD1L) (Bos taurus (Bovine)).